The sequence spans 474 residues: Probable aspartate--tRNA ligase, cytoplasmic (474 aa).

E203 is a binding site for L-aspartate. The interval 225-228 (QLYK) is aspartate. Position 247 (R247) interacts with L-aspartate. ATP-binding positions include 247 to 249 (RAE), 255 to 257 (RYL), and E397. 2 residues coordinate L-aspartate: S400 and R404. Residue 445–448 (GLER) coordinates ATP.

Belongs to the class-II aminoacyl-tRNA synthetase family. Type 2 subfamily. In terms of assembly, homodimer.

Its subcellular location is the cytoplasm. It catalyses the reaction tRNA(Asp) + L-aspartate + ATP = L-aspartyl-tRNA(Asp) + AMP + diphosphate. This is Probable aspartate--tRNA ligase, cytoplasmic from Enterocytozoon bieneusi (strain H348) (Microsporidian parasite).